The chain runs to 266 residues: Probable dihydroorotate dehydrogenase B (NAD(+)), electron transfer subunit (266 aa).

In terms of domain architecture, FAD-binding FR-type spans 5–99 (NVPEVLEIKR…RGPYGRGFEL (95 aa)). 4 residues coordinate [2Fe-2S] cluster: cysteine 217, cysteine 222, cysteine 225, and cysteine 235.

Belongs to the PyrK family. In terms of assembly, heterotetramer of 2 PyrK and 2 PyrD type B subunits. [2Fe-2S] cluster serves as cofactor. It depends on FAD as a cofactor.

It functions in the pathway pyrimidine metabolism; UMP biosynthesis via de novo pathway; orotate from (S)-dihydroorotate (NAD(+) route): step 1/1. Responsible for channeling the electrons from the oxidation of dihydroorotate from the FMN redox center in the PyrD type B subunit to the ultimate electron acceptor NAD(+). The sequence is that of Probable dihydroorotate dehydrogenase B (NAD(+)), electron transfer subunit from Methanothermobacter thermautotrophicus (strain ATCC 29096 / DSM 1053 / JCM 10044 / NBRC 100330 / Delta H) (Methanobacterium thermoautotrophicum).